A 345-amino-acid chain; its full sequence is MIFNYVFSNSFSFLYLMVNVQCRIKEIMYWNICLYWDVFSKLIIYNKVCQFGRIHIFHGKNRHQLLRTCHFTPSKRHSAMSFFEALGAGICAGLAVDLSLFPIDTLKTRLQAKGGFVKNGGFHGVYRGLGSILVGSAPGASLFFTTYENMKSRLSQSGLGLSDPQIHMCSASLGEIAACIVRVPTEVIKQRAQASGGTLSSRNILQTILKSNNVWRDFYAGYGITIAREIPFTLIQFPIWEHLKLKWRIKHSRNKNLAHEAAISGSIAGGIAAALTTPFDVVKTRIMTSQQRLSYVFTIKSIVAHEGFLALYKGIVPRVLWLSGGGAIFLGCYDVILNFMKAEGL.

3 Solcar repeats span residues 80 to 153 (MSFF…MKSR), 162 to 246 (SDPQ…LKLK), and 256 to 339 (NLAH…ILNF). The next 6 helical transmembrane spans lie at 83–103 (FEAL…LFPI), 128–148 (GLGS…TTYE), 220–240 (AGYG…FPIW), 262–282 (AISG…FDVV), 296–316 (VFTI…KGIV), and 319–339 (VLWL…ILNF).

This sequence belongs to the mitochondrial carrier (TC 2.A.29) family.

Its subcellular location is the mitochondrion inner membrane. This is an uncharacterized protein from Schizosaccharomyces pombe (strain 972 / ATCC 24843) (Fission yeast).